Here is a 430-residue protein sequence, read N- to C-terminus: Glutamate-1-semialdehyde 2,1-aminomutase (430 aa).

Residue Lys-270 is modified to N6-(pyridoxal phosphate)lysine.

Belongs to the class-III pyridoxal-phosphate-dependent aminotransferase family. HemL subfamily. In terms of assembly, homodimer. Pyridoxal 5'-phosphate is required as a cofactor.

Its subcellular location is the cytoplasm. It catalyses the reaction (S)-4-amino-5-oxopentanoate = 5-aminolevulinate. Its pathway is porphyrin-containing compound metabolism; protoporphyrin-IX biosynthesis; 5-aminolevulinate from L-glutamyl-tRNA(Glu): step 2/2. The chain is Glutamate-1-semialdehyde 2,1-aminomutase from Cupriavidus metallidurans (strain ATCC 43123 / DSM 2839 / NBRC 102507 / CH34) (Ralstonia metallidurans).